The primary structure comprises 620 residues: EF-hand calcium-binding domain-containing protein 7 (620 aa).

Residues 1-24 (MANHSSLPSQKYAASERQEYQKPQ) are disordered. EF-hand domains are found at residues 98-133 (ATKN…KGEK) and 134-169 (MSQE…TCEQ). The disordered stretch occupies residues 176–234 (ERMDSNSKAKRQQFGSYIEKSPERSSSPKSSHGNLKLFDSETSTRKENKSSRPSSARSY). The span at 213 to 225 (FDSETSTRKENKS) shows a compositional bias: basic and acidic residues. Residues 394 to 429 (EFKSALSDMFDIIDLDGNGLLSLAEYNFFEMRTSGE) form the EF-hand 3 domain. Positions 407, 409, 411, and 418 each coordinate Ca(2+).

It localises to the cell projection. It is found in the cilium membrane. Functionally, plays a role in the ciliary Hedgehog (Hh) signaling. This Xenopus laevis (African clawed frog) protein is EF-hand calcium-binding domain-containing protein 7 (efcab7).